The primary structure comprises 221 residues: Ribosomal RNA small subunit methyltransferase G (221 aa).

S-adenosyl-L-methionine-binding positions include Gly-89, Leu-94, 140-141 (VE), and Arg-154.

Belongs to the methyltransferase superfamily. RNA methyltransferase RsmG family.

The protein resides in the cytoplasm. The catalysed reaction is guanosine(527) in 16S rRNA + S-adenosyl-L-methionine = N(7)-methylguanosine(527) in 16S rRNA + S-adenosyl-L-homocysteine. Functionally, specifically methylates the N7 position of guanine in position 527 of 16S rRNA. In Methylibium petroleiphilum (strain ATCC BAA-1232 / LMG 22953 / PM1), this protein is Ribosomal RNA small subunit methyltransferase G.